Reading from the N-terminus, the 398-residue chain is Carbamoyl phosphate synthase large chain (398 aa).

Residues 1–187 (KLGVPQPEGG…LAKIAAKVIV (187 aa)) form the ATP-grasp domain. Residues 1–255 (KLGVPQPEGG…YKAELAADNV (255 aa)) are carbamoyl phosphate synthetic domain. ATP is bound by residues arginine 32, aspartate 71, leucine 73, glutamate 78, glycine 103, valine 104, histidine 105, serine 106, glutamine 146, and glutamate 158. Residues glutamine 146, glutamate 158, and asparagine 160 each contribute to the Mg(2+) site. Mn(2+) is bound by residues glutamine 146, glutamate 158, and asparagine 160. Residues 254 to 395 (NVLPLTGKVF…NEYHKEMEEE (142 aa)) form the MGS-like domain. An allosteric domain region spans residues 256 to 398 (LPLTGKVFLS…HKEMEEENKV (143 aa)).

This sequence belongs to the CarB family. In terms of assembly, composed of two chains; the small (or glutamine) chain promotes the hydrolysis of glutamine to ammonia, which is used by the large (or ammonia) chain to synthesize carbamoyl phosphate. Tetramer of heterodimers (alpha,beta)4. Mg(2+) is required as a cofactor. It depends on Mn(2+) as a cofactor.

The catalysed reaction is hydrogencarbonate + L-glutamine + 2 ATP + H2O = carbamoyl phosphate + L-glutamate + 2 ADP + phosphate + 2 H(+). It catalyses the reaction hydrogencarbonate + NH4(+) + 2 ATP = carbamoyl phosphate + 2 ADP + phosphate + 2 H(+). It functions in the pathway amino-acid biosynthesis; L-arginine biosynthesis; carbamoyl phosphate from bicarbonate: step 1/1. The protein operates within pyrimidine metabolism; UMP biosynthesis via de novo pathway; (S)-dihydroorotate from bicarbonate: step 1/3. Functionally, large subunit of the glutamine-dependent carbamoyl phosphate synthetase (CPSase). CPSase catalyzes the formation of carbamoyl phosphate from the ammonia moiety of glutamine, carbonate, and phosphate donated by ATP, constituting the first step of 2 biosynthetic pathways, one leading to arginine and/or urea and the other to pyrimidine nucleotides. The large subunit (synthetase) binds the substrates ammonia (free or transferred from glutamine from the small subunit), hydrogencarbonate and ATP and carries out an ATP-coupled ligase reaction, activating hydrogencarbonate by forming carboxy phosphate which reacts with ammonia to form carbamoyl phosphate. The chain is Carbamoyl phosphate synthase large chain from Methanosarcina barkeri.